The chain runs to 413 residues: S-adenosylmethionine synthase (413 aa).

ATP is bound at residue His15. Asp17 contributes to the Mg(2+) binding site. A K(+)-binding site is contributed by Glu43. Residues Glu56 and Gln100 each contribute to the L-methionine site. The tract at residues 100 to 110 (QSPDISQGVNE) is flexible loop. ATP contacts are provided by residues 171–173 (DGK), 248–249 (KF), Asp257, 263–264 (RK), Ala280, and Lys284. Asp257 contacts L-methionine. Residue Lys288 coordinates L-methionine.

This sequence belongs to the AdoMet synthase family. Homotetramer; dimer of dimers. Mg(2+) is required as a cofactor. K(+) serves as cofactor.

Its subcellular location is the cytoplasm. It carries out the reaction L-methionine + ATP + H2O = S-adenosyl-L-methionine + phosphate + diphosphate. Its pathway is amino-acid biosynthesis; S-adenosyl-L-methionine biosynthesis; S-adenosyl-L-methionine from L-methionine: step 1/1. Functionally, catalyzes the formation of S-adenosylmethionine (AdoMet) from methionine and ATP. The overall synthetic reaction is composed of two sequential steps, AdoMet formation and the subsequent tripolyphosphate hydrolysis which occurs prior to release of AdoMet from the enzyme. The chain is S-adenosylmethionine synthase from Prochlorococcus marinus subsp. pastoris (strain CCMP1986 / NIES-2087 / MED4).